The sequence spans 228 residues: ATP-dependent dethiobiotin synthetase BioD (228 aa).

ATP is bound at residue Asp13–Phe18. Thr17 contacts Mg(2+). Lys38 is an active-site residue. Ser42 lines the substrate pocket. ATP contacts are provided by residues Asp55, Glu116–Gly119, Asn179–Lys180, and Pro208–Ile210. Positions 55 and 116 each coordinate Mg(2+).

Belongs to the dethiobiotin synthetase family. In terms of assembly, homodimer. The cofactor is Mg(2+).

The protein localises to the cytoplasm. The catalysed reaction is (7R,8S)-7,8-diammoniononanoate + CO2 + ATP = (4R,5S)-dethiobiotin + ADP + phosphate + 3 H(+). Its pathway is cofactor biosynthesis; biotin biosynthesis; biotin from 7,8-diaminononanoate: step 1/2. In terms of biological role, catalyzes a mechanistically unusual reaction, the ATP-dependent insertion of CO2 between the N7 and N8 nitrogen atoms of 7,8-diaminopelargonic acid (DAPA, also called 7,8-diammoniononanoate) to form a ureido ring. The chain is ATP-dependent dethiobiotin synthetase BioD from Clostridium perfringens (strain 13 / Type A).